The primary structure comprises 286 residues: Single myb histone 5 (286 aa).

An HTH myb-type domain is found at 1-61 (MGAPKQRWTS…KWRNMNVIVT (61 aa)). A DNA-binding region (H-T-H motif) is located at residues 28-57 (WRMILNDPELSSTLRYRSNVDLKDKWRNMN). In terms of domain architecture, H15 spans 122–190 (SHSRLDNIIM…KVNRKYRIAP (69 aa)). Residues 229–277 (EAAAAAAAHAVAEAEAIMAEAEAAAREAEAAEAEARAAQAFAEAAVLTL) adopt a coiled-coil conformation.

This sequence belongs to the histone H1/H5 family. SMH subfamily. Forms a homodimer and heterodimers.

Its subcellular location is the nucleus. The protein resides in the chromosome. It is found in the nucleolus. The protein localises to the telomere. In terms of biological role, binds preferentially double-stranded telomeric repeats, but may also bind to the single telomeric strand. In Zea mays (Maize), this protein is Single myb histone 5 (SMH5).